Reading from the N-terminus, the 102-residue chain is Putative pterin-4-alpha-carbinolamine dehydratase (102 aa).

The protein belongs to the pterin-4-alpha-carbinolamine dehydratase family.

The catalysed reaction is (4aS,6R)-4a-hydroxy-L-erythro-5,6,7,8-tetrahydrobiopterin = (6R)-L-erythro-6,7-dihydrobiopterin + H2O. In Burkholderia vietnamiensis (strain G4 / LMG 22486) (Burkholderia cepacia (strain R1808)), this protein is Putative pterin-4-alpha-carbinolamine dehydratase.